Consider the following 179-residue polypeptide: MARLKEFYRDTVMKQLMEKFQYSNVMEVPRITKITLNMGLGEAVGDKKIIEHAVSDMTAIAGQKPVVTKARKSIAGFKIRDDYPIGCMVTLRREAMYEFLDRLVNVALPRVRDFRGLNPKGFDGRGNYNMGIKEQIIFPEVDYDKIDALRGMNISITTTAKNDEEARALLSAFSFPFKH.

It belongs to the universal ribosomal protein uL5 family. Part of the 50S ribosomal subunit; part of the 5S rRNA/L5/L18/L25 subcomplex. Contacts the 5S rRNA and the P site tRNA. Forms a bridge to the 30S subunit in the 70S ribosome.

In terms of biological role, this is one of the proteins that bind and probably mediate the attachment of the 5S RNA into the large ribosomal subunit, where it forms part of the central protuberance. In the 70S ribosome it contacts protein S13 of the 30S subunit (bridge B1b), connecting the 2 subunits; this bridge is implicated in subunit movement. Contacts the P site tRNA; the 5S rRNA and some of its associated proteins might help stabilize positioning of ribosome-bound tRNAs. The sequence is that of Large ribosomal subunit protein uL5 from Thioalkalivibrio sulfidiphilus (strain HL-EbGR7).